The following is a 141-amino-acid chain: MLTAEDKKLIQQVWDKLQGCQEEVGAETLQRMFTTYPQTKTYFPHFDLSPGSDQIRGHGKKVVAALGTAVKSLDNLSQALSELSNLHAYNLRVDPVNFKLLAQCLQVVLATHMTKDYTPEIHAAFDKFLSAVAAVLAEKYR.

In terms of domain architecture, Globin spans methionine 1 to arginine 141. Histidine 58 and histidine 87 together coordinate heme b.

Belongs to the globin family. In terms of assembly, heterotetramer of two alpha-D chains and two beta chains. Red blood cells.

Involved in oxygen transport from the lung to the various peripheral tissues. The chain is Hemoglobin subunit alpha-D (HBAD) from Apus apus (Common swift).